A 390-amino-acid chain; its full sequence is Transforming growth factor beta-1 proprotein (390 aa).

Positions 1 to 29 (MPPSRLRLLPLLLPLLWLLVLAPGRPASG) are cleaved as a signal peptide. Residues 30–74 (LSTCKTIDMELVKRKRIEAIRGQILSKLRLASPPSQGDVPPGPLP) are straightjacket domain. The tract at residues 75–271 (EAVLALYNST…ATPLERAQHL (197 aa)) is arm domain. 3 N-linked (GlcNAc...) asparagine glycosylation sites follow: Asn82, Asn136, and Asn176. The segment at 226 to 252 (DSKDNTLRVEINGIGPKRRGDLAAIHG) is bowtie tail. The short motif at 244-246 (RGD) is the Cell attachment site element. 4 disulfides stabilise this stretch: Cys285/Cys294, Cys293/Cys356, Cys322/Cys387, and Cys326/Cys389.

The protein belongs to the TGF-beta family. In terms of assembly, homodimer; disulfide-linked. Interacts with the serine proteases, HTRA1 and HTRA3: the interaction with either inhibits TGFB1-mediated signaling and the HTRA protease activity is required for this inhibition. May interact with THSD4; this interaction may lead to sequestration by FBN1 microfibril assembly and attenuation of TGFB signaling. Interacts with CD109, DPT and ASPN. Interacts with EFEMP2. Interacts with TSKU; the interaction contributes to regulation of the hair cycle. Interacts with TGFBR3. Homodimer; disulfide-linked. Interacts with transforming growth factor beta-1 (TGF-beta-1) chain; interaction is non-covalent and maintains TGF-beta-1 in a latent state; each latency-associated peptide (LAP) monomer interacts with TGF-beta-1 in the other monomer. Interacts with LTBP1; leading to regulation of TGF-beta-1 activation. Interacts with LRRC32/GARP; leading to regulation of TGF-beta-1 activation on the surface of activated regulatory T-cells (Tregs). Interacts with LRRC33/NRROS; leading to regulation of TGF-beta-1 in macrophages and microglia. Interacts (via cell attachment site) with integrins ITGAV and ITGB6 (ITGAV:ITGB6), leading to release of the active TGF-beta-1. Interacts with NREP; the interaction results in a decrease in TGFB1 autoinduction. Interacts with HSP90AB1; inhibits latent TGFB1 activation. As to quaternary structure, homodimer; disulfide-linked. Interacts with TGF-beta receptors (TGFBR1 and TGFBR2), leading to signal transduction. In terms of processing, transforming growth factor beta-1 proprotein: The precursor proprotein is cleaved in the Golgi apparatus by FURIN to form Transforming growth factor beta-1 (TGF-beta-1) and Latency-associated peptide (LAP) chains, which remain non-covalently linked, rendering TGF-beta-1 inactive. Post-translationally, N-glycosylated. Deglycosylation leads to activation of Transforming growth factor beta-1 (TGF-beta-1); mechanisms triggering deglycosylation-driven activation of TGF-beta-1 are however unclear.

The protein localises to the secreted. The protein resides in the extracellular space. Its subcellular location is the extracellular matrix. Its function is as follows. Transforming growth factor beta-1 proprotein: Precursor of the Latency-associated peptide (LAP) and Transforming growth factor beta-1 (TGF-beta-1) chains, which constitute the regulatory and active subunit of TGF-beta-1, respectively. Required to maintain the Transforming growth factor beta-1 (TGF-beta-1) chain in a latent state during storage in extracellular matrix. Associates non-covalently with TGF-beta-1 and regulates its activation via interaction with 'milieu molecules', such as LTBP1, LRRC32/GARP and LRRC33/NRROS, that control activation of TGF-beta-1. Interaction with LRRC33/NRROS regulates activation of TGF-beta-1 in macrophages and microglia. Interaction with LRRC32/GARP controls activation of TGF-beta-1 on the surface of activated regulatory T-cells (Tregs). Interaction with integrins (ITGAV:ITGB6 or ITGAV:ITGB8) results in distortion of the Latency-associated peptide chain and subsequent release of the active TGF-beta-1. In terms of biological role, multifunctional protein that regulates the growth and differentiation of various cell types and is involved in various processes, such as normal development, immune function, microglia function and responses to neurodegeneration. Activation into mature form follows different steps: following cleavage of the proprotein in the Golgi apparatus, Latency-associated peptide (LAP) and Transforming growth factor beta-1 (TGF-beta-1) chains remain non-covalently linked rendering TGF-beta-1 inactive during storage in extracellular matrix. At the same time, LAP chain interacts with 'milieu molecules', such as LTBP1, LRRC32/GARP and LRRC33/NRROS that control activation of TGF-beta-1 and maintain it in a latent state during storage in extracellular milieus. TGF-beta-1 is released from LAP by integrins (ITGAV:ITGB6 or ITGAV:ITGB8): integrin-binding to LAP stabilizes an alternative conformation of the LAP bowtie tail and results in distortion of the LAP chain and subsequent release of the active TGF-beta-1. Once activated following release of LAP, TGF-beta-1 acts by binding to TGF-beta receptors (TGFBR1 and TGFBR2), which transduce signal. While expressed by many cells types, TGF-beta-1 only has a very localized range of action within cell environment thanks to fine regulation of its activation by Latency-associated peptide chain (LAP) and 'milieu molecules'. Plays an important role in bone remodeling: acts as a potent stimulator of osteoblastic bone formation, causing chemotaxis, proliferation and differentiation in committed osteoblasts. Can promote either T-helper 17 cells (Th17) or regulatory T-cells (Treg) lineage differentiation in a concentration-dependent manner. At high concentrations, leads to FOXP3-mediated suppression of RORC and down-regulation of IL-17 expression, favoring Treg cell development. At low concentrations in concert with IL-6 and IL-21, leads to expression of the IL-17 and IL-23 receptors, favoring differentiation to Th17 cells. Stimulates sustained production of collagen through the activation of CREB3L1 by regulated intramembrane proteolysis (RIP). Mediates SMAD2/3 activation by inducing its phosphorylation and subsequent translocation to the nucleus. Positively regulates odontoblastic differentiation in dental papilla cells, via promotion of IPO7-mediated translocation of phosphorylated SMAD2 to the nucleus and subsequent transcription of target genes. Can induce epithelial-to-mesenchymal transition (EMT) and cell migration in various cell types. The chain is Transforming growth factor beta-1 proprotein (TGFB1) from Cavia porcellus (Guinea pig).